The primary structure comprises 612 residues: MRMDMYHTKILKAIESEDYISVRRRVLRQLVESLIYEGIITPARIEKEEQILFLIQGLDEDNKSVTYECYGRERITFGRISIDSLIVRVQDGKQEIQSVAQFLEEVFRVVNVEQTKLDSFIHELEQTIFKDTIAQYERCNKLKYTQKSYDELENHLIDGHPYHPSYKARIGFQYRDNFRYGYEFMRPIKLIWIAAHKKNATVGYENEVIYDKILKSEVGERKLEAYKERIHSMGCDPKQYLFIPVHPWQWENFIISNYAEDIQDKGIIYLGESADDYCAQQSMRTLRNVTNPKRPYVKVSLNILNTSTLRTLKPYSVASAPAISNWLSNVVSQDSYLRDESRVILLKEFSSVMYDTNKKATYGSLGCIWRESVHHYLGEQEDAVPFNGLYAKEKDGTPIIDAWLNKYGIENWLRLLIQKAIIPVIHLVVEHGIALESHGQNMILVHKEGLPVRIALKDFHEGLEFYRPFLKEMNKCPDFTKMHKTYANGKMNDFFEMDRIECLQEMVLDALFLFNVGELAFVLADKYEWKEESFWMIVVEEIENHFRKYPHLKDRFESIQLYTPTFYAEQLTKRRLYIDVESLVHEVPNPLYRARQLNIQKSVATGGNYANC.

ATP contacts are provided by residues Ser282 to Arg284, Lys298, Arg310, Tyr390, and Glu461.

The protein belongs to the IucA/IucC family. In terms of assembly, homodimer.

The catalysed reaction is N(8)-citryl-spermidine + spermidine + ATP = N(8),N'(8)-citryl-bis(spermidine) + AMP + diphosphate + H(+). It carries out the reaction N(1)-(3,4-dihydroxybenzoyl)-N(8)-citryl-spermidine + spermidine + ATP = N(1)-(3,4-dihydroxybenzoyl)-N(8),N'(8)-citryl-bis(spermidine) + AMP + diphosphate + H(+). It functions in the pathway siderophore biosynthesis; petrobactin biosynthesis. Involved in the biosynthesis of petrobactin, a catecholate siderophore that functions in both iron acquisition and virulence. Catalyzes the ATP-dependent condensation of spermidine with N(8)-citryl-spermidine or N(1)-(3,4-dihydroxbenzoyl)-N(8)-citryl-spermidine, two intermediates in petrobactin biosynthesis pathway. The chain is Citryl-spermidine/3,4-dihydroxybenzoyl-citryl-spermidine:spermidine ligase from Bacillus anthracis.